Reading from the N-terminus, the 374-residue chain is Succinyl-diaminopimelate desuccinylase (374 aa).

H66 lines the Zn(2+) pocket. The active site involves D68. D99 serves as a coordination point for Zn(2+). E133 acts as the Proton acceptor in catalysis. E134, E162, and H348 together coordinate Zn(2+).

Belongs to the peptidase M20A family. DapE subfamily. In terms of assembly, homodimer. Zn(2+) serves as cofactor. Co(2+) is required as a cofactor.

It carries out the reaction N-succinyl-(2S,6S)-2,6-diaminopimelate + H2O = (2S,6S)-2,6-diaminopimelate + succinate. It functions in the pathway amino-acid biosynthesis; L-lysine biosynthesis via DAP pathway; LL-2,6-diaminopimelate from (S)-tetrahydrodipicolinate (succinylase route): step 3/3. Catalyzes the hydrolysis of N-succinyl-L,L-diaminopimelic acid (SDAP), forming succinate and LL-2,6-diaminopimelate (DAP), an intermediate involved in the bacterial biosynthesis of lysine and meso-diaminopimelic acid, an essential component of bacterial cell walls. This Coxiella burnetii (strain RSA 331 / Henzerling II) protein is Succinyl-diaminopimelate desuccinylase.